We begin with the raw amino-acid sequence, 949 residues long: Zinc finger CCHC domain-containing protein 14 (949 aa).

Disordered stretches follow at residues 25–44 (SSLNGGGGHGGKGAPGPGGA), 59–92 (EAPVSSVSNSLENALHTSAHSTEESLPKRPLGKH), 200–221 (STSSPPQQLQSPSPGNPSLSKV), 236–262 (AGIPSSQSGAQHHGQHPAGSAAPLPHC), 355–457 (KEKS…DKEK), and 739–779 (PESS…PQPA). Positions 28–43 (NGGGGHGGKGAPGPGG) are enriched in gly residues. A compositionally biased stretch (polar residues) spans 61-78 (PVSSVSNSLENALHTSAH). A compositionally biased stretch (low complexity) spans 200 to 219 (STSSPPQQLQSPSPGNPSLS). The segment covering 395 to 411 (HAAELRVEVEQPHHQLP) has biased composition (basic and acidic residues). Residues 416–425 (SSEYSSSSSS) show a composition bias toward low complexity. Residues 431–457 (AREESSDSAEENDRRVEIHLESSDKEK) are compositionally biased toward basic and acidic residues. The segment at 906–923 (LSCYNCGATGHRAQDCKQ) adopts a CCHC-type zinc-finger fold.

In Homo sapiens (Human), this protein is Zinc finger CCHC domain-containing protein 14 (ZCCHC14).